The sequence spans 284 residues: uncharacterized protein (284 aa).

The protein to E.coli YnjA.

This is an uncharacterized protein from Mycobacterium tuberculosis (strain CDC 1551 / Oshkosh).